We begin with the raw amino-acid sequence, 721 residues long: Procollagen-lysine,2-oxoglutarate 5-dioxygenase (721 aa).

A signal peptide spans 1 to 21; sequence MRIQQSALLLLLLAVTSQGDA. 3 N-linked (GlcNAc...) asparagine glycosylation sites follow: Asn504, Asn530, and Asn536. One can recognise a Fe2OG dioxygenase domain in the interval 627-721; it reads NPPRALMNFM…RYIMISFIDP (95 aa). Fe cation-binding residues include His650 and Asp652. The N-linked (GlcNAc...) asparagine glycan is linked to Asn680. His702 lines the Fe cation pocket. Residue Asn709 is glycosylated (N-linked (GlcNAc...) asparagine). Arg712 contacts 2-oxoglutarate.

Requires L-ascorbate as cofactor. Fe(2+) is required as a cofactor.

It localises to the endoplasmic reticulum. Its subcellular location is the secreted. The protein localises to the extracellular space. The enzyme catalyses L-lysyl-[collagen] + 2-oxoglutarate + O2 = (5R)-5-hydroxy-L-lysyl-[collagen] + succinate + CO2. Forms hydroxylysine residues in collagen type IV. Required for the secretion of collagen type IV (vkg) from haemocytes, fat body and follicle cells. This chain is Procollagen-lysine,2-oxoglutarate 5-dioxygenase, found in Drosophila melanogaster (Fruit fly).